The sequence spans 219 residues: uncharacterized protein (219 aa).

Positions 1 to 26 (MNDRGVPNSRTGPSLLALLPAANSYA) are cleaved as a signal peptide. Disordered stretches follow at residues 36–57 (AVGVGGGSYKSPTRGSPGTRGG) and 88–219 (SGLG…GLCE). The span at 127–173 (LSPPSALGSSPAGRGRPAPAIAAAKSSPLSASAAPGRCGARPRAPSR) shows a compositional bias: low complexity. Over residues 176–202 (RERRPRGNPRAPLRRGARGRRRSHTRG) the composition is skewed to basic residues.

This is an uncharacterized protein from Gallid herpesvirus 2 (strain Chicken/Md5/ATCC VR-987) (GaHV-2).